Here is a 276-residue protein sequence, read N- to C-terminus: 3-methyl-2-oxobutanoate hydroxymethyltransferase (276 aa).

D49 and D88 together coordinate Mg(2+). Residues 49–50 (DS), D88, and K118 contribute to the 3-methyl-2-oxobutanoate site. E120 lines the Mg(2+) pocket. E187 (proton acceptor) is an active-site residue.

The protein belongs to the PanB family. As to quaternary structure, homodecamer; pentamer of dimers. Mg(2+) is required as a cofactor.

The protein localises to the cytoplasm. It carries out the reaction 3-methyl-2-oxobutanoate + (6R)-5,10-methylene-5,6,7,8-tetrahydrofolate + H2O = 2-dehydropantoate + (6S)-5,6,7,8-tetrahydrofolate. It functions in the pathway cofactor biosynthesis; (R)-pantothenate biosynthesis; (R)-pantoate from 3-methyl-2-oxobutanoate: step 1/2. Catalyzes the reversible reaction in which hydroxymethyl group from 5,10-methylenetetrahydrofolate is transferred onto alpha-ketoisovalerate to form ketopantoate. The polypeptide is 3-methyl-2-oxobutanoate hydroxymethyltransferase (Afipia carboxidovorans (strain ATCC 49405 / DSM 1227 / KCTC 32145 / OM5) (Oligotropha carboxidovorans)).